The primary structure comprises 714 residues: Kinesin-like protein KIN-13 (714 aa).

The SAM domain maps to 1–63 (MSDLVYQWLE…FRLITTLKSR (63 aa)). The span at 69–81 (QQPSAPNTGATPQ) shows a compositional bias: polar residues. Disordered stretches follow at residues 69-109 (QQPS…NDIQ) and 122-161 (GGYE…NPRG). A compositionally biased stretch (low complexity) spans 82 to 92 (SVPSSHVSPHV). Pro residues predominate over residues 151–160 (PNAPNPPNPR). Positions 183-515 (RIRVVIRKRP…LRYADRVKEL (333 aa)) constitute a Kinesin motor domain. 273–280 (GQTGSGKS) provides a ligand contact to ATP.

Belongs to the TRAFAC class myosin-kinesin ATPase superfamily. Kinesin family. KIN-13 subfamily. In terms of assembly, interacts with PLK. Post-translationally, phosphorylated by PLK.

Its subcellular location is the cytoplasm. The protein resides in the cytoskeleton. It is found in the cell projection. It localises to the cilium. The protein localises to the flagellum. Its subcellular location is the flagellum basal body. The protein resides in the flagellum axoneme. It is found in the spindle. It localises to the chromosome. The protein localises to the centromere. Its subcellular location is the kinetochore. In terms of biological role, involved in cell cycle. Involved in formation of flagella, regulation of flagellar length, and formation of median bodies during interphase. Regulates flagellar length in all eight distal flagellar tips by promoting disassembly of the microtubules. Disassembles microtubules at the distal flagellar tips in a length-dependent manner in order to maintain different equilibrium lengths of the four flagellar pairs. Regulates interphase and mitotic microtubule dynamics. Regulates microtubule disassembly dynamics of the dual mitotic spindles and the median body. This is Kinesin-like protein KIN-13 from Giardia intestinalis (strain ATCC 50803 / WB clone C6) (Giardia lamblia).